The chain runs to 476 residues: Proline--tRNA ligase 2 (476 aa).

It belongs to the class-II aminoacyl-tRNA synthetase family. ProS type 3 subfamily. Homodimer.

It is found in the cytoplasm. The enzyme catalyses tRNA(Pro) + L-proline + ATP = L-prolyl-tRNA(Pro) + AMP + diphosphate. Catalyzes the attachment of proline to tRNA(Pro) in a two-step reaction: proline is first activated by ATP to form Pro-AMP and then transferred to the acceptor end of tRNA(Pro). The sequence is that of Proline--tRNA ligase 2 from Bacillus cereus (strain ATCC 10987 / NRS 248).